We begin with the raw amino-acid sequence, 471 residues long: Variant surface glycoprotein WRATAT A (471 aa).

Residues 1–18 (MSVLFLLLAITRTASVKA) form the signal peptide. N-linked (GlcNAc...) asparagine glycans are attached at residues N61 and N133. The interval 373–457 (QEQTLATTGT…ANTTGSSNSF (85 aa)) is disordered. Residues 379–392 (TTGTKSSSPQSTQQ) are compositionally biased toward low complexity. Intrachain disulfides connect C401–C414 and C410–C427. The segment covering 401–447 (CNDKAKETECNSPCKWDKEEKDEKKRCKLSEEGKQAEKENQEGKDGK) has biased composition (basic and acidic residues). The segment covering 448 to 457 (ANTTGSSNSF) has biased composition (polar residues). The N-linked (GlcNAc...) asparagine glycan is linked to N449. Residue S454 is the site of GPI-anchor amidated serine attachment. Residues 455 to 471 (NSFVIKTSPLLLAVLLL) constitute a propeptide, removed in mature form.

The protein resides in the cell membrane. VSG forms a coat on the surface of the parasite. The trypanosome evades the immune response of the host by expressing a series of antigenically distinct VSGs from an estimated 1000 VSG genes. This Trypanosoma brucei rhodesiense protein is Variant surface glycoprotein WRATAT A.